A 168-amino-acid polypeptide reads, in one-letter code: uncharacterized protein (168 aa).

This is an uncharacterized protein from Saccharomyces cerevisiae (strain ATCC 204508 / S288c) (Baker's yeast).